Here is a 1331-residue protein sequence, read N- to C-terminus: MVLTQQENLSVLVGQRFTCLLGTDLQLDPDGVSKWPWKSGIVRAASHKDLHCPEIKIFVEFDDEAWEKRTWIELYGATVKMFLVEHNLVLADRVSPSNSVPVQCPAMVYKVLVGKFSLGTATCLQFLGDKDKLFLSKELVKPVRDRETLKQFMQENKTFNKAFQELIRKSVDESRLQQATRNIIGMPINVYSMDPSMQWFSATISNVRTASRALEIKCEQLPSLKIIDPALLHVVLVHNYGDLNDKSRKPRAPKRKSQDTESEDQTELKQTRNEEVPSKDVTQKTSFLTYRRDDGKTLVVVDNPKATNNLFNYINTTTEDQQKVQQQSLSSKQSVPVGFGEALLGCAATTPGILNAATPPQANSPPSFGAATPQGKGTQNLPGDTTLLNGEAKREETNLFLSAAASQGNKRSLGFGMMESPSTFSSLSSMPSWSGQPKSENGPKSENLFAAFTNSSTVFPKGFEFSVKSFPEQKMLSVTDSPKTAPPMTCVQQQEQKVVKKPENNHTSVRAIKPQEPPYPKSPNKNDGVTYPRSILLDPQKLKRLQQSGDCFVQDGSCNDIAPHLHKCRECRLDRFGRSREQRDSAVFCRFFHFRRLHFNKHGMLKEGGFLTPNKYDAEAINLWLPLASNVVDLDLDTAKYILANIGDHFCKLVMSEKEVMSATDPSKQVAWKRAVRGVREMCDACDTTIFNLHWVCPKCGFGVCVDCYRMKKKSLSSGEDGNETFSWLKCVKGQLHEPENLMPTQIVPGKALYDVGDIVHSVRGRWGIKSNCLCSNKHVRPVVKPVVKEEVKPSTPEPEPTKAPLAQPNVCTAPDPIAIPSTPPTPACSSPLSWLTNLSQTTVNKENKDNLFASNLEHKPLPSFASFGKPVSALQTFGSSILTPTTSNNSGFLRNLLNSSTLKQETNEKSTPKILDDIFASLVQSRPLSDFARKPQGLPIQPSLMGFNTPHYWLCDNRLLCLQDPNNKSNWNVFRECWKQGQPVIVSGIHNNLNSELWRPESFRREFGDQEADLVNCRTNDIITGATVGDFWEGFEDISARLKNDKGEAMVLKLKDWPPGEDFRDTMLSRFEDLMNNIPLPEYTRREGKLNLAARLPAYFVRPDLGPKMYNAYGLITPEDRKYGTTNLHLDVSDATNVMVYVGIPKGEHDQEQEVIRTIQDGDADELTIKRYIEFKEKPGALWHIFAAKDTEKIRQFLKKVAEEQGHENPPDHDPIHDQSWYLDNTLRKRLLQEHGVQGWAIVQFLGDAVFIPAGAPHQVHNLYSCIKVAEDFVSPEHVKHCFWLTQEFRYLSHTHTNHEDKLQVKNVIYHAVKDSIAILKANEASLGKL.

Disordered regions lie at residues 243–280 (LNDKSRKPRAPKRKSQDTESEDQTELKQTRNEEVPSKD), 358–381 (TPPQANSPPSFGAATPQGKGTQNL), and 497–532 (KVVKKPENNHTSVRAIKPQEPPYPKSPNKNDGVTYP). Residues 266–280 (TELKQTRNEEVPSKD) show a composition bias toward basic and acidic residues. The C6-type zinc-finger motif lies at 683 to 708 (CDACDTTIFNLHWVCPKCGFGVCVDC). The LXXLL motif signature appears at 894 to 898 (LRNLL). The JmjC domain occupies 1086–1291 (RREGKLNLAA…HCFWLTQEFR (206 aa)). The Fe cation site is built by His1130, Asp1132, and His1259.

The protein belongs to the JHDM2 histone demethylase family. The cofactor is Fe(2+).

The protein resides in the cytoplasm. It localises to the nucleus. The enzyme catalyses N(6),N(6)-dimethyl-L-lysyl(9)-[histone H3] + 2 2-oxoglutarate + 2 O2 = L-lysyl(9)-[histone H3] + 2 formaldehyde + 2 succinate + 2 CO2. Its function is as follows. Histone demethylase that specifically demethylates 'Lys-9' of histone H3, thereby playing a central role in histone code. Preferentially demethylates mono- and dimethylated H3 'Lys-9' residue, with a preference for dimethylated residue, while it has weak or no activity on trimethylated H3 'Lys-9'. Demethylation of Lys residue generates formaldehyde and succinate. The protein is Lysine-specific demethylase 3A-A (kdm3a-a) of Xenopus laevis (African clawed frog).